The sequence spans 243 residues: R-spondin-2 (243 aa).

The first 23 residues, methionine 1–glycine 23, serve as a signal peptide directing secretion. 11 disulfide bridges follow: cysteine 40–cysteine 46, cysteine 43–cysteine 52, cysteine 55–cysteine 74, cysteine 78–cysteine 93, cysteine 96–cysteine 104, cysteine 101–cysteine 110, cysteine 113–cysteine 124, cysteine 128–cysteine 141, cysteine 145–cysteine 187, cysteine 156–cysteine 163, and cysteine 196–cysteine 203. Residues methionine 90–proline 134 form an FU repeat. One can recognise a TSP type-1 domain in the interval glycine 144 to proline 204. N-linked (GlcNAc...) asparagine glycosylation occurs at asparagine 160. The span at proline 204–leucine 224 shows a compositional bias: basic residues. A disordered region spans residues proline 204 to glutamine 243.

It belongs to the R-spondin family. In terms of assembly, interacts with WNT1. Binds heparin. Interacts with LGR4, LGR5 and LGR6.

It localises to the secreted. Functionally, activator of the canonical Wnt signaling pathway by acting as a ligand for LGR4-6 receptors. Upon binding to LGR4-6 (LGR4, LGR5 or LGR6), LGR4-6 associate with phosphorylated LRP6 and frizzled receptors that are activated by extracellular Wnt receptors, triggering the canonical Wnt signaling pathway to increase expression of target genes. Also regulates the canonical Wnt/beta-catenin-dependent pathway and non-canonical Wnt signaling by acting as an inhibitor of ZNRF3, an important regulator of the Wnt signaling pathway. Probably also acts as a ligand for frizzled and LRP receptors. During embryonic development, plays a crucial role in limb specification, amplifying the Wnt signaling pathway independently of LGR4-6 receptors, possibly by acting as a direct antagonistic ligand to RNF43 and ZNRF3, hence governing the number of limbs an embryo should form. This chain is R-spondin-2 (Rspo2), found in Mus musculus (Mouse).